The sequence spans 193 residues: Flagellin B3 (193 aa).

A propeptide spanning residues 1–12 is cleaved from the precursor; that stretch reads MFEFITDEDERG.

This sequence belongs to the archaeal flagellin family. Post-translationally, glycosylated.

The protein resides in the archaeal flagellum. In terms of biological role, flagellin is the subunit protein which polymerizes to form the filaments of archaeal flagella. The polypeptide is Flagellin B3 (flaB3) (Halobacterium salinarum (strain ATCC 700922 / JCM 11081 / NRC-1) (Halobacterium halobium)).